Reading from the N-terminus, the 185-residue chain is CASP-like protein 5A1 (185 aa).

Residues M1–T45 lie on the Cytoplasmic side of the membrane. Residues L46 to M66 traverse the membrane as a helical segment. The Extracellular segment spans residues L67–A76. A helical membrane pass occupies residues F77 to I97. Residues D98–D121 lie on the Cytoplasmic side of the membrane. A helical transmembrane segment spans residues G122–I142. Over G143–A160 the chain is Extracellular. The helical transmembrane segment at I161–L181 threads the bilayer. The Cytoplasmic segment spans residues L182 to L185.

The protein belongs to the Casparian strip membrane proteins (CASP) family. Homodimer and heterodimers.

The protein resides in the cell membrane. The protein is CASP-like protein 5A1 of Picea sitchensis (Sitka spruce).